We begin with the raw amino-acid sequence, 367 residues long: Histidinol-phosphate aminotransferase 1 (367 aa).

Lys-226 carries the N6-(pyridoxal phosphate)lysine modification.

The protein belongs to the class-II pyridoxal-phosphate-dependent aminotransferase family. Histidinol-phosphate aminotransferase subfamily. In terms of assembly, homodimer. Requires pyridoxal 5'-phosphate as cofactor.

It carries out the reaction L-histidinol phosphate + 2-oxoglutarate = 3-(imidazol-4-yl)-2-oxopropyl phosphate + L-glutamate. It participates in amino-acid biosynthesis; L-histidine biosynthesis; L-histidine from 5-phospho-alpha-D-ribose 1-diphosphate: step 7/9. The sequence is that of Histidinol-phosphate aminotransferase 1 (hisC1) from Haemophilus influenzae (strain ATCC 51907 / DSM 11121 / KW20 / Rd).